The sequence spans 735 residues: Protein PAT1 homolog 2 (735 aa).

Disordered stretches follow at residues 39 to 93 (TFGL…REVK) and 336 to 366 (QLHPQHRRILSQRQRPQSSSRKQWESRPDPY). 2 stretches are compositionally biased toward basic and acidic residues: residues 49 to 59 (EPTKQEEDHKK) and 67 to 93 (PKIEEPEKPQPIKETKKPEKSPLREVK). Over residues 346–356 (SQRQRPQSSSR) the composition is skewed to low complexity.

It belongs to the PAT1 family. Interacts with ribonucleoprotein complex components. Interacts with cpeb.

The protein resides in the cytoplasm. Its subcellular location is the nucleus. Functionally, RNA-binding protein that acts as a translational repressor. The polypeptide is Protein PAT1 homolog 2 (patl2) (Xenopus tropicalis (Western clawed frog)).